A 117-amino-acid polypeptide reads, in one-letter code: DNA-directed RNA polymerase subunit omega (117 aa).

Residues 96-105 (KEEAEEEAKQ) show a composition bias toward basic and acidic residues. The disordered stretch occupies residues 96–117 (KEEAEEEAKQKNSRAAKAAAAE). Positions 108 to 117 (SRAAKAAAAE) are enriched in low complexity.

This sequence belongs to the RNA polymerase subunit omega family. In terms of assembly, the RNAP catalytic core consists of 2 alpha, 1 beta, 1 beta' and 1 omega subunit. When a sigma factor is associated with the core the holoenzyme is formed, which can initiate transcription.

It carries out the reaction RNA(n) + a ribonucleoside 5'-triphosphate = RNA(n+1) + diphosphate. Promotes RNA polymerase assembly. Latches the N- and C-terminal regions of the beta' subunit thereby facilitating its interaction with the beta and alpha subunits. The polypeptide is DNA-directed RNA polymerase subunit omega (Lactococcus lactis subsp. cremoris (strain MG1363)).